We begin with the raw amino-acid sequence, 720 residues long: Protein-glutamine gamma-glutamyltransferase 5 (720 aa).

Ala2 carries the N-acetylalanine modification. Active-site residues include Cys278, His337, and Asp360. Ca(2+)-binding residues include Asn400, Asp402, Glu448, and Glu453. The disordered stretch occupies residues 470–499; sequence HGSQRGAELQPSRPTSLSQDSPRSLHTPSL. Positions 481–496 are enriched in polar residues; the sequence is SRPTSLSQDSPRSLHT.

This sequence belongs to the transglutaminase superfamily. Transglutaminase family. Ca(2+) is required as a cofactor. As to expression, expressed in foreskin keratinocytes.

It localises to the cytoplasm. The enzyme catalyses L-glutaminyl-[protein] + L-lysyl-[protein] = [protein]-L-lysyl-N(6)-5-L-glutamyl-[protein] + NH4(+). In terms of biological role, catalyzes the cross-linking of proteins and the conjugation of polyamines to proteins. Contributes to the formation of the cornified cell envelope of keratinocytes. This chain is Protein-glutamine gamma-glutamyltransferase 5 (TGM5), found in Homo sapiens (Human).